A 130-amino-acid chain; its full sequence is MSNVPTELKYATSHEWVLHEGDGIYSVGITEHAQELLGDMVFIDLPEVGTVVAAGDDCAVAESVKAASDIYAPISGEVVEVNEDLENSPELVNSAPYTDGWLFRIKISDESDLDELLDAEGYQASLEEDE.

Residues I24–K106 enclose the Lipoyl-binding domain. Residue K65 is modified to N6-lipoyllysine.

The protein belongs to the GcvH family. The glycine cleavage system is composed of four proteins: P, T, L and H. Requires (R)-lipoate as cofactor.

Its function is as follows. The glycine cleavage system catalyzes the degradation of glycine. The H protein shuttles the methylamine group of glycine from the P protein to the T protein. The chain is Glycine cleavage system H protein from Pectobacterium atrosepticum (strain SCRI 1043 / ATCC BAA-672) (Erwinia carotovora subsp. atroseptica).